The following is a 441-amino-acid chain: COBRA-like protein 2 (441 aa).

The first 28 residues, 1–28, serve as a signal peptide directing secretion; sequence MNILFSRFSFLLLFLCSWTSFTFTTTEA. N37, N162, N170, N209, N234, N249, N314, N329, and N348 each carry an N-linked (GlcNAc...) asparagine glycan. A lipid anchor (GPI-anchor amidated asparagine) is attached at N417. Residues 418–441 constitute a propeptide, removed in mature form; that stretch reads ASPNIATSPFVILLITFLSVLILM.

It belongs to the COBRA family. Expressed in roots, stems, leaves, flowers and siliques.

The protein resides in the cell membrane. The chain is COBRA-like protein 2 (COBL2) from Arabidopsis thaliana (Mouse-ear cress).